The sequence spans 721 residues: Ribonucleoside-diphosphate reductase subunit alpha (721 aa).

Residues Thr159, 175–176 (SC), Gly204, 384–388 (NLCSE), and 589–593 (PTGSI) each bind substrate. A disulfide bridge connects residues Cys176 and Cys413. Asn384 (proton acceptor) is an active-site residue. Cys386 functions as the Cysteine radical intermediate in the catalytic mechanism. Glu388 functions as the Proton acceptor in the catalytic mechanism.

It belongs to the ribonucleoside diphosphate reductase large chain family. As to quaternary structure, tetramer of two alpha and two beta subunits.

The catalysed reaction is a 2'-deoxyribonucleoside 5'-diphosphate + [thioredoxin]-disulfide + H2O = a ribonucleoside 5'-diphosphate + [thioredoxin]-dithiol. Under complex allosteric control mediated by deoxynucleoside triphosphates and ATP binding. The type of nucleotide bound at the specificity site determines substrate preference. It seems probable that ATP makes the enzyme reduce CDP and UDP, dGTP favors ADP reduction and dTTP favors GDP reduction. Functionally, provides the precursors necessary for DNA synthesis. Catalyzes the biosynthesis of deoxyribonucleotides from the corresponding ribonucleotides. The polypeptide is Ribonucleoside-diphosphate reductase subunit alpha (nrdE) (Mycoplasma genitalium (strain ATCC 33530 / DSM 19775 / NCTC 10195 / G37) (Mycoplasmoides genitalium)).